The primary structure comprises 224 residues: UPF0758 protein Maqu_3564 (224 aa).

One can recognise an MPN domain in the interval 102-224 (PLRSPADTRR…VISLAERGLM (123 aa)). The Zn(2+) site is built by H173, H175, and D186. The JAMM motif signature appears at 173–186 (HNHPSGVAEPSQAD).

Belongs to the UPF0758 family.

This is UPF0758 protein Maqu_3564 from Marinobacter nauticus (strain ATCC 700491 / DSM 11845 / VT8) (Marinobacter aquaeolei).